A 210-amino-acid chain; its full sequence is High frequency lysogenization protein HflD homolog (210 aa).

Positions 103 to 130 (EAKAKLAERLQQIERQLPLYENDIMADQ) form a coiled coil.

The protein belongs to the HflD family.

The protein resides in the cytoplasm. It localises to the cell inner membrane. The protein is High frequency lysogenization protein HflD homolog of Actinobacillus pleuropneumoniae serotype 5b (strain L20).